The sequence spans 904 residues: Translation initiation factor IF-2 (904 aa).

Disordered stretches follow at residues 134-248 (RQRN…GSHV) and 267-315 (HLSA…FERP). Basic and acidic residues predominate over residues 136–177 (RNLDEQQRLAESDRVRDEEIQRKRDEEQAAKDRAEAERKAAE). Low complexity-rich tracts occupy residues 178–230 (EAAA…STPA) and 285–303 (GRPG…RGSN). In terms of domain architecture, tr-type G spans 403 to 572 (TRPPVVTIMG…SLQAEVLELK (170 aa)). The interval 412–419 (GHVDHGKT) is G1. Residue 412 to 419 (GHVDHGKT) coordinates GTP. Positions 437 to 441 (GITQH) are G2. The tract at residues 458–461 (DTPG) is G3. Residues 458–462 (DTPGH) and 512–515 (NKID) contribute to the GTP site. Positions 512–515 (NKID) are G4. Residues 548 to 550 (SAK) form a G5 region.

It belongs to the TRAFAC class translation factor GTPase superfamily. Classic translation factor GTPase family. IF-2 subfamily.

It localises to the cytoplasm. One of the essential components for the initiation of protein synthesis. Protects formylmethionyl-tRNA from spontaneous hydrolysis and promotes its binding to the 30S ribosomal subunits. Also involved in the hydrolysis of GTP during the formation of the 70S ribosomal complex. The chain is Translation initiation factor IF-2 from Xanthomonas oryzae pv. oryzae (strain PXO99A).